A 100-amino-acid polypeptide reads, in one-letter code: UPF0213 protein FN1575 (100 aa).

A GIY-YIG domain is found at 1 to 77 (MAYYLYMLRC…KYIKKKKENI (77 aa)).

This sequence belongs to the UPF0213 family.

This is UPF0213 protein FN1575 from Fusobacterium nucleatum subsp. nucleatum (strain ATCC 25586 / DSM 15643 / BCRC 10681 / CIP 101130 / JCM 8532 / KCTC 2640 / LMG 13131 / VPI 4355).